A 570-amino-acid chain; its full sequence is 15-cis-phytoene desaturase, chloroplastic/chromoplastic (570 aa).

The N-terminal 91 residues, 1–91, are a transit peptide targeting the chloroplast and chromoplast; sequence MSIVGLVSVV…AQLSASFRSS (91 aa). FAD-binding positions include 104-120, alanine 108, 127-128, lysine 135, 152-153, and tyrosine 158; these read GAGLAGLSTAKYLADAG, ES, and HI. Arginine 293 is a substrate binding site. FAD is bound at residue aspartate 524. Alanine 532 contacts substrate. Residue methionine 534 participates in FAD binding.

It belongs to the carotenoid/retinoid oxidoreductase family. As to quaternary structure, homotetramer. FAD serves as cofactor. As to expression, expressed more strongly in flowers than in leaves.

It is found in the plastid. The protein resides in the chloroplast. Its subcellular location is the chromoplast. It localises to the membrane. The enzyme catalyses 2 a plastoquinone + 15-cis-phytoene = 9,9',15-tri-cis-zeta-carotene + 2 a plastoquinol. Its pathway is carotenoid biosynthesis; lycopene biosynthesis. In terms of biological role, converts phytoene into zeta-carotene via the intermediary of phytofluene by the symmetrical introduction of two double bonds at the C-11 and C-11' positions of phytoene with a concomitant isomerization of two neighboring double bonds at the C9 and C9' positions from trans to cis. This is 15-cis-phytoene desaturase, chloroplastic/chromoplastic (PDS1) from Narcissus pseudonarcissus (Daffodil).